A 398-amino-acid polypeptide reads, in one-letter code: O-methyltransferase aoiO (398 aa).

Asp-251 contacts S-adenosyl-L-methionine. His-299 (proton acceptor) is an active-site residue.

It belongs to the class I-like SAM-binding methyltransferase superfamily. Cation-independent O-methyltransferase family.

O-methyltransferase; part of the gene cluster that mediates the biosynthesis of a methylated derivative of known natural products orthosporin and diaporthin. Seems not to be involved in the biosynthesis of the identified final product of the pathway and its function has still to be determined. The sequence is that of O-methyltransferase aoiO from Aspergillus oryzae (strain ATCC 42149 / RIB 40) (Yellow koji mold).